Consider the following 265-residue polypeptide: 3-methyl-2-oxobutanoate hydroxymethyltransferase (265 aa).

Mg(2+) is bound by residues Asp-44 and Asp-83. 3-methyl-2-oxobutanoate contacts are provided by residues Asp-44–Ser-45, Asp-83, and Lys-113. Glu-115 is a binding site for Mg(2+). Glu-183 serves as the catalytic Proton acceptor.

The protein belongs to the PanB family. As to quaternary structure, homodecamer; pentamer of dimers. The cofactor is Mg(2+).

Its subcellular location is the cytoplasm. The enzyme catalyses 3-methyl-2-oxobutanoate + (6R)-5,10-methylene-5,6,7,8-tetrahydrofolate + H2O = 2-dehydropantoate + (6S)-5,6,7,8-tetrahydrofolate. The protein operates within cofactor biosynthesis; (R)-pantothenate biosynthesis; (R)-pantoate from 3-methyl-2-oxobutanoate: step 1/2. Catalyzes the reversible reaction in which hydroxymethyl group from 5,10-methylenetetrahydrofolate is transferred onto alpha-ketoisovalerate to form ketopantoate. The sequence is that of 3-methyl-2-oxobutanoate hydroxymethyltransferase from Leptospira interrogans serogroup Icterohaemorrhagiae serovar copenhageni (strain Fiocruz L1-130).